A 166-amino-acid chain; its full sequence is 2-C-methyl-D-erythritol 2,4-cyclodiphosphate synthase (166 aa).

Residues D17 and H19 each coordinate a divalent metal cation. 4-CDP-2-C-methyl-D-erythritol 2-phosphate contacts are provided by residues 17 to 19 and 43 to 44; these read DSH and HS. H51 contacts a divalent metal cation. 4-CDP-2-C-methyl-D-erythritol 2-phosphate is bound by residues 65-67, 109-115, and R151; these read DIG and AQKPKMA.

This sequence belongs to the IspF family. As to quaternary structure, homotrimer. A divalent metal cation is required as a cofactor.

The enzyme catalyses 4-CDP-2-C-methyl-D-erythritol 2-phosphate = 2-C-methyl-D-erythritol 2,4-cyclic diphosphate + CMP. Its pathway is isoprenoid biosynthesis; isopentenyl diphosphate biosynthesis via DXP pathway; isopentenyl diphosphate from 1-deoxy-D-xylulose 5-phosphate: step 4/6. Involved in the biosynthesis of isopentenyl diphosphate (IPP) and dimethylallyl diphosphate (DMAPP), two major building blocks of isoprenoid compounds. Catalyzes the conversion of 4-diphosphocytidyl-2-C-methyl-D-erythritol 2-phosphate (CDP-ME2P) to 2-C-methyl-D-erythritol 2,4-cyclodiphosphate (ME-CPP) with a corresponding release of cytidine 5-monophosphate (CMP). This is 2-C-methyl-D-erythritol 2,4-cyclodiphosphate synthase from Rhodopirellula baltica (strain DSM 10527 / NCIMB 13988 / SH1).